Consider the following 188-residue polypeptide: MGVDIRHNKDRKVHRKEPKSQDIYLRLLVKLYRFLARRSNAPFNRVVLRRLFMSRTNRPPIAVSRLIRKMKLPGRENKIAVVVGTVTDDVRIQDIPKLKICALRVTDGARRRILKAGGQVMTFDQLALASPKGQGTVLLSGPRKAREVYRHFGKAPGTPHSHTKPYVRSKGRKFERARGRRASCGYKN.

The disordered stretch occupies residues 153–188 (GKAPGTPHSHTKPYVRSKGRKFERARGRRASCGYKN). Basic residues predominate over residues 161-171 (SHTKPYVRSKG).

This sequence belongs to the eukaryotic ribosomal protein eL18 family. In terms of assembly, component of the large ribosomal subunit.

The protein localises to the cytoplasm. The protein resides in the cytosol. Its subcellular location is the rough endoplasmic reticulum. Functionally, component of the large ribosomal subunit. The ribosome is a large ribonucleoprotein complex responsible for the synthesis of proteins in the cell. This Oreochromis mossambicus (Mozambique tilapia) protein is Large ribosomal subunit protein eL18 (rpl18).